Consider the following 168-residue polypeptide: GPI-anchored protein LLG1 (168 aa).

A signal peptide spans 1–23; it reads MELLSRALFFFLLLSVLSSFSSS. N-linked (GlcNAc...) asparagine glycosylation occurs at Asn57. The GPI-anchor amidated asparagine moiety is linked to residue Asn144. The propeptide at 145 to 168 is removed in mature form; the sequence is AATTSSSRLWLTVSAALLVFVKLF.

As to quaternary structure, interacts with FER. In terms of tissue distribution, expressed in pollen, pollen tubes, sporophytic pistil tissues, in the early stages of female gametophyte development, and in unfertilized, mature ovules. Expressed in roots, lateral roots, shoots, cotyledons, petioles, developing leaves and anther filaments.

The protein resides in the cell membrane. In terms of biological role, component of the FER-regulated Rho GTPase signaling complex. Acts as a chaperone and coreceptor for FER. Required for localization of FER to the plasma membrane. The sequence is that of GPI-anchored protein LLG1 from Arabidopsis thaliana (Mouse-ear cress).